We begin with the raw amino-acid sequence, 679 residues long: Protein asunder (679 aa).

The stretch at Arg519–Gln541 forms a coiled coil. The tract at residues Gly564–Arg610 is disordered. Positions Leu604–Arg610 match the Nuclear localization signal (NLS) motif.

This sequence belongs to the Integrator subunit 13 family. Belongs to the multiprotein complex Integrator, at least composed of IntS1, IntS2, IntS3, IntS4, omd/IntS5, IntS6, defl/IntS7, IntS8, IntS9, IntS10, IntS11, IntS12, asun/IntS13, IntS14 and IntS15. The core complex associates with protein phosphatase 2A subunits mts/PP2A and Pp2A-29B, to form the Integrator-PP2A (INTAC) complex. Phosphorylated.

It is found in the nucleus. The protein localises to the cytoplasm. The protein resides in the perinuclear region. In terms of biological role, component of the integrator complex, a multiprotein complex that terminates RNA polymerase II (Pol II) transcription in the promoter-proximal region of genes. The integrator complex provides a quality checkpoint during transcription elongation by driving premature transcription termination of transcripts that are unfavorably configured for transcriptional elongation: the complex terminates transcription by (1) catalyzing dephosphorylation of the C-terminal domain (CTD) of Pol II subunit Polr2A/Rbp1 and Spt5, and (2) degrading the exiting nascent RNA transcript via endonuclease activity. The integrator complex is also involved in the 3'-end processing of the U7 snRNA, and also the spliceosomal snRNAs U1, U2, U4 and U5. The sequence is that of Protein asunder (asun) from Drosophila mojavensis (Fruit fly).